A 134-amino-acid chain; its full sequence is Protein X (134 aa).

Residues 25–48 (SRGRPVSGPFGPLPSPSSSAVPAD) form a disordered region. Residues 29 to 47 (PVSGPFGPLPSPSSSAVPA) are compositionally biased toward low complexity. The mitochondrial targeting sequence stretch occupies residues 68 to 117 (PCALRLTSARRMETTVNAHQVLPKVLHKRTLGLSAMSTTDLEAYFKDCLF).

This sequence belongs to the orthohepadnavirus protein X family. May form homodimer. May interact with host CEBPA, CFLAR, CREB1, DDB1, E4F1, HBXIP, HSPD1/HSP60, NFKBIA, POLR2E and SMAD4. Interacts with host SMC5-SMC6 complex and induces its degradation. Interacts with host TRPC4AP; leading to prevent ubiquitination of TRPC4AP. Interacts with host PLSCR1; this interaction promotes ubiquitination and degradation of HBx and impairs HBx-mediated cell proliferation. A fraction may be phosphorylated in insect cells and HepG2 cells, a human hepatoblastoma cell line. Phosphorylated in vitro by host protein kinase C or mitogen-activated protein kinase. N-acetylated in insect cells.

The protein localises to the host cytoplasm. It localises to the host nucleus. It is found in the host mitochondrion. Multifunctional protein that plays a role in silencing host antiviral defenses and promoting viral transcription. Does not seem to be essential for HBV infection. May be directly involved in development of cirrhosis and liver cancer (hepatocellular carcinoma). Most of cytosolic activities involve modulation of cytosolic calcium. The effect on apoptosis is controversial depending on the cell types in which the studies have been conducted. May induce apoptosis by localizing in mitochondria and causing loss of mitochondrial membrane potential. May also modulate apoptosis by binding host CFLAR, a key regulator of the death-inducing signaling complex (DISC). Promotes viral transcription by using the host E3 ubiquitin ligase DDB1 to target the SMC5-SMC6 complex to proteasomal degradation. This host complex would otherwise bind to viral episomal DNA, and prevents its transcription. Moderately stimulates transcription of many different viral and cellular transcription elements. Promoters and enhancers stimulated by HBx contain DNA binding sites for NF-kappa-B, AP-1, AP-2, c-EBP, ATF/CREB, or the calcium-activated factor NF-AT. This Homo sapiens (Human) protein is Protein X.